Here is a 469-residue protein sequence, read N- to C-terminus: Adenosylhomocysteinase (469 aa).

The substrate site is built by T63, D139, and E164. 165 to 167 contributes to the NAD(+) binding site; sequence TTT. Positions 194 and 198 each coordinate substrate. Residues N199, 228–233, E251, N300, 321–323, and N375 each bind NAD(+); these read GYGDVG and IGH.

Belongs to the adenosylhomocysteinase family. NAD(+) is required as a cofactor.

It localises to the cytoplasm. It carries out the reaction S-adenosyl-L-homocysteine + H2O = L-homocysteine + adenosine. It functions in the pathway amino-acid biosynthesis; L-homocysteine biosynthesis; L-homocysteine from S-adenosyl-L-homocysteine: step 1/1. Its function is as follows. May play a key role in the regulation of the intracellular concentration of adenosylhomocysteine. The polypeptide is Adenosylhomocysteinase (Pseudomonas putida (strain GB-1)).